Here is a 99-residue protein sequence, read N- to C-terminus: MMNMQNMMKQAQKLQKQMEKSQAELAATTFTGKSAQDLVVAELTGDKKVVNITFADAVVDPDDVETLQDMTVQALNDALGQIDEATKKSMGAFAGKLPF.

The protein belongs to the YbaB/EbfC family. In terms of assembly, homodimer.

The protein resides in the cytoplasm. Its subcellular location is the nucleoid. Binds to DNA and alters its conformation. May be involved in regulation of gene expression, nucleoid organization and DNA protection. The polypeptide is Nucleoid-associated protein str1598 (Streptococcus thermophilus (strain CNRZ 1066)).